The sequence spans 477 residues: Bifunctional protein HldE (477 aa).

Positions 1-318 (MKVTLPEFER…ENAVRGRADT (318 aa)) are ribokinase. Lysine 179 is modified (N6-acetyllysine). 195-198 (NLSE) contributes to the ATP binding site. Aspartate 264 is an active-site residue. The cytidylyltransferase stretch occupies residues 344 to 477 (MTNGVFDILH…IKKIQQDKKG (134 aa)).

In the N-terminal section; belongs to the carbohydrate kinase PfkB family. The protein in the C-terminal section; belongs to the cytidylyltransferase family. As to quaternary structure, homodimer.

The enzyme catalyses D-glycero-beta-D-manno-heptose 7-phosphate + ATP = D-glycero-beta-D-manno-heptose 1,7-bisphosphate + ADP + H(+). It catalyses the reaction D-glycero-beta-D-manno-heptose 1-phosphate + ATP + H(+) = ADP-D-glycero-beta-D-manno-heptose + diphosphate. The protein operates within nucleotide-sugar biosynthesis; ADP-L-glycero-beta-D-manno-heptose biosynthesis; ADP-L-glycero-beta-D-manno-heptose from D-glycero-beta-D-manno-heptose 7-phosphate: step 1/4. It participates in nucleotide-sugar biosynthesis; ADP-L-glycero-beta-D-manno-heptose biosynthesis; ADP-L-glycero-beta-D-manno-heptose from D-glycero-beta-D-manno-heptose 7-phosphate: step 3/4. Its pathway is bacterial outer membrane biogenesis; LPS core biosynthesis. Its function is as follows. Catalyzes the phosphorylation of D-glycero-D-manno-heptose 7-phosphate at the C-1 position to selectively form D-glycero-beta-D-manno-heptose-1,7-bisphosphate. Functionally, catalyzes the ADP transfer from ATP to D-glycero-beta-D-manno-heptose 1-phosphate, yielding ADP-D-glycero-beta-D-manno-heptose. This Shigella flexneri protein is Bifunctional protein HldE.